Consider the following 680-residue polypeptide: Putative cyclin-dependent serine/threonine-protein kinase DDB_G0272797/DDB_G0274007 (680 aa).

The Protein kinase domain occupies 4–381 (YIILSKCGQG…SLEALEHPWF (378 aa)). Residues 10–18 (CGQGTYGSV) and K33 contribute to the ATP site. The active-site Proton acceptor is D125. 4 disordered regions span residues 243–299 (QQQQ…LQSP), 409–444 (RQLQQQQHHHQQQQQQQQQQQQQQQPHQQQLIQRQH), 483–507 (LAQHQQYNSQQHQQHHQQQHQQHQQ), and 597–680 (QQQQ…KSNG). Positions 257–286 (NNNNNNNNNNNNNNNNNNNNNNNNNNNNNN) are enriched in low complexity. Residues 287–297 (KYNNISTSCLQ) show a composition bias toward polar residues. Composition is skewed to low complexity over residues 410-444 (QLQQQQHHHQQQQQQQQQQQQQQQPHQQQLIQRQH), 483-494 (LAQHQQYNSQQH), and 597-616 (QQQQHQYQPPQQYNHQPPQH). Residues 617-631 (QHQHQHQHQHQHQHQ) are compositionally biased toward basic residues. Over residues 632–642 (HQPQPQHQHQP) the composition is skewed to low complexity. Over residues 643-655 (QPQPQPTPTPTPT) the composition is skewed to pro residues. A compositionally biased stretch (low complexity) spans 656-680 (STPTTTTIPPTITTTIQPTISKSNG).

This sequence belongs to the protein kinase superfamily. CMGC Ser/Thr protein kinase family. CDC2/CDKX subfamily.

It catalyses the reaction L-seryl-[protein] + ATP = O-phospho-L-seryl-[protein] + ADP + H(+). The enzyme catalyses L-threonyl-[protein] + ATP = O-phospho-L-threonyl-[protein] + ADP + H(+). The protein is Putative cyclin-dependent serine/threonine-protein kinase DDB_G0272797/DDB_G0274007 of Dictyostelium discoideum (Social amoeba).